A 257-amino-acid polypeptide reads, in one-letter code: Coenzyme F420:L-glutamate ligase (257 aa).

Residues 9–12 (VPEV), 38–39 (ST), and Lys-43 each bind GTP. Residue Asp-113 participates in a divalent metal cation binding. Asn-116 contributes to the GTP binding site. 3 residues coordinate a divalent metal cation: Asp-154, Thr-155, and Glu-212. 210–217 (TGEGDGGT) contributes to the GTP binding site.

Belongs to the CofE family. In terms of assembly, homodimer. Mg(2+) serves as cofactor. Requires Mn(2+) as cofactor. The cofactor is K(+).

It carries out the reaction oxidized coenzyme F420-0 + GTP + L-glutamate = oxidized coenzyme F420-1 + GDP + phosphate + H(+). The enzyme catalyses oxidized coenzyme F420-1 + GTP + L-glutamate = oxidized coenzyme F420-2 + GDP + phosphate + H(+). It functions in the pathway cofactor biosynthesis; coenzyme F420 biosynthesis. Functionally, catalyzes the GTP-dependent successive addition of two or more gamma-linked L-glutamates to the L-lactyl phosphodiester of 7,8-didemethyl-8-hydroxy-5-deazariboflavin (F420-0) to form coenzyme F420-0-glutamyl-glutamate (F420-2) or polyglutamated F420 derivatives. The chain is Coenzyme F420:L-glutamate ligase from Haloarcula marismortui (strain ATCC 43049 / DSM 3752 / JCM 8966 / VKM B-1809) (Halobacterium marismortui).